Here is a 408-residue protein sequence, read N- to C-terminus: 1-deoxy-D-xylulose 5-phosphate reductoisomerase (408 aa).

Residues Thr26, Gly27, Ser28, Ile29, and Asn143 each contribute to the NADPH site. Lys144 serves as a coordination point for 1-deoxy-D-xylulose 5-phosphate. Position 145 (Glu145) interacts with NADPH. Asp167 serves as a coordination point for Mn(2+). Ser168, Glu169, Ser193, and His216 together coordinate 1-deoxy-D-xylulose 5-phosphate. Glu169 provides a ligand contact to Mn(2+). Gly222 is a binding site for NADPH. The 1-deoxy-D-xylulose 5-phosphate site is built by Ser229, Asn234, Lys235, and Glu238. Position 238 (Glu238) interacts with Mn(2+).

Belongs to the DXR family. Requires Mg(2+) as cofactor. It depends on Mn(2+) as a cofactor.

It carries out the reaction 2-C-methyl-D-erythritol 4-phosphate + NADP(+) = 1-deoxy-D-xylulose 5-phosphate + NADPH + H(+). The protein operates within isoprenoid biosynthesis; isopentenyl diphosphate biosynthesis via DXP pathway; isopentenyl diphosphate from 1-deoxy-D-xylulose 5-phosphate: step 1/6. In terms of biological role, catalyzes the NADPH-dependent rearrangement and reduction of 1-deoxy-D-xylulose-5-phosphate (DXP) to 2-C-methyl-D-erythritol 4-phosphate (MEP). The sequence is that of 1-deoxy-D-xylulose 5-phosphate reductoisomerase from Corynebacterium jeikeium (strain K411).